Here is a 149-residue protein sequence, read N- to C-terminus: Transcriptional repressor NrdR (149 aa).

A zinc finger lies at 3 to 34 (CPFCTAKDTKVIDSRLVGGGHQVRRRRECNDC). Residues 49 to 139 (PRVIKQDGSR…VYRSFEDIRE (91 aa)) enclose the ATP-cone domain.

It belongs to the NrdR family. Zn(2+) serves as cofactor.

In terms of biological role, negatively regulates transcription of bacterial ribonucleotide reductase nrd genes and operons by binding to NrdR-boxes. The protein is Transcriptional repressor NrdR of Pseudoalteromonas translucida (strain TAC 125).